Here is a 38-residue protein sequence, read N- to C-terminus: Photosystem II reaction center protein L (38 aa).

The chain crosses the membrane as a helical span at residues 17 to 37 (SLFWGLLLIFVLAILFSNYFF).

The protein belongs to the PsbL family. In terms of assembly, PSII is composed of 1 copy each of membrane proteins PsbA, PsbB, PsbC, PsbD, PsbE, PsbF, PsbH, PsbI, PsbJ, PsbK, PsbL, PsbM, PsbT, PsbX, PsbY, PsbZ, Psb30/Ycf12, at least 3 peripheral proteins of the oxygen-evolving complex and a large number of cofactors. It forms dimeric complexes.

It is found in the plastid. Its subcellular location is the chloroplast thylakoid membrane. One of the components of the core complex of photosystem II (PSII). PSII is a light-driven water:plastoquinone oxidoreductase that uses light energy to abstract electrons from H(2)O, generating O(2) and a proton gradient subsequently used for ATP formation. It consists of a core antenna complex that captures photons, and an electron transfer chain that converts photonic excitation into a charge separation. This subunit is found at the monomer-monomer interface and is required for correct PSII assembly and/or dimerization. The protein is Photosystem II reaction center protein L of Chara vulgaris (Common stonewort).